The sequence spans 298 residues: HTH-type transcriptional regulator ArgP (298 aa).

Residues leucine 4 to threonine 60 form the HTH lysR-type domain. A DNA-binding region (H-T-H motif) is located at residues phenylalanine 21–lysine 40.

The protein belongs to the LysR transcriptional regulatory family. Homodimer.

Functionally, controls the transcription of genes involved in arginine and lysine metabolism. This is HTH-type transcriptional regulator ArgP from Vibrio vulnificus (strain YJ016).